Consider the following 468-residue polypeptide: MGTSDLRNAPPGTWLPARRLARWIFQPLERFLHVQAASGIVLLIATAVALAWANSPWAASYERLWHTPVRLGVGSYLVERDLHFWINDGLMTIFFFVVGLEIRREIHQGELSVLKRAVLPVAAALGGMLFPALIYLALNPSPPERSGWGVPMATDIAFAVGALALLGNRVPAALRVLLLALAIIDDIGAILVIAVFYSSSISVTGFGLVAVGIAGVLALQRFGVRSPVVYAAAGVVIWAGLLSAGVHPTITGVLLGLLTPVHPWFGEEGFLAEARRALEDFQERATGGHDARELTGPLAQLSQARREALPPVVRLEAALHPWVAYGIMPLFALANAGVSLGDVHLGAAGSTRLLLGVVFGLTMGKPLGIMVACSLSVKLGLAALPRGVLWRGVLVVGCVAGIGFTMAIFVAGLAFGAGQRLGVAKLAVLLGSLISALVAMAVGRLVLRPAEAGQIAATADEAEASTEY.

Transmembrane regions (helical) follow at residues 31–51 (FLHVQAASGIVLLIATAVALA), 82–102 (LHFWINDGLMTIFFFVVGLEI), 118–138 (VLPVAAALGGMLFPALIYLAL), 147–167 (GWGVPMATDIAFAVGALALLG), 176–196 (VLLLALAIIDDIGAILVIAVF), 199–219 (SSISVTGFGLVAVGIAGVLAL), 226–246 (SPVVYAAAGVVIWAGLLSAGV), 321–341 (PWVAYGIMPLFALANAGVSLG), 353–373 (LLLGVVFGLTMGKPLGIMVAC), 393–413 (VLVVGCVAGIGFTMAIFVAGL), and 422–442 (GVAKLAVLLGSLISALVAMAV).

Belongs to the NhaA Na(+)/H(+) (TC 2.A.33) antiporter family.

The protein resides in the cell inner membrane. The enzyme catalyses Na(+)(in) + 2 H(+)(out) = Na(+)(out) + 2 H(+)(in). Functionally, na(+)/H(+) antiporter that extrudes sodium in exchange for external protons. This is Na(+)/H(+) antiporter NhaA 2 from Sorangium cellulosum (strain So ce56) (Polyangium cellulosum (strain So ce56)).